A 173-amino-acid chain; its full sequence is Lipoprotein signal peptidase (173 aa).

A run of 4 helical transmembrane segments spans residues 14-34 (LAWL…KYYF), 44-64 (IIVI…AAFS), 72-92 (WQRW…VVWL), and 98-118 (DDTW…GNLY). Catalysis depends on residues aspartate 128 and aspartate 147. A helical transmembrane segment spans residues 139–159 (YFPAFNVADSAITVGAIMLAL).

This sequence belongs to the peptidase A8 family.

It localises to the cell inner membrane. The catalysed reaction is Release of signal peptides from bacterial membrane prolipoproteins. Hydrolyzes -Xaa-Yaa-Zaa-|-(S,diacylglyceryl)Cys-, in which Xaa is hydrophobic (preferably Leu), and Yaa (Ala or Ser) and Zaa (Gly or Ala) have small, neutral side chains.. It participates in protein modification; lipoprotein biosynthesis (signal peptide cleavage). In terms of biological role, this protein specifically catalyzes the removal of signal peptides from prolipoproteins. The sequence is that of Lipoprotein signal peptidase from Pseudomonas syringae pv. tomato (strain ATCC BAA-871 / DC3000).